Consider the following 1050-residue polypeptide: MKSEDYTYARMAPDIHEERQYHCEECDQLFESKTELSNHQKYSCGTPHSAFSLVENSFPPILNDDSDLTEMQHAHECKECDQVFPDMQSLEKHLLSHTEEREYKCDQCPKAFNWKSNLIRHQMSHDTGKHYECENCSKQVFTDPSNLQRHIRSQHVGARAHACSECGKTFATSSGLKQHKHIHSSVKPFVCEVCHKSYTQFSNLCRHKRMHADCRTQIKCKDCGQMFSTTSSLNKHRRFCEGKNHFTAGGLFRQGISLPGNTAMDKVSMIGMNHAGLADYFGASRHAAGLTFPTAPGFPFSFPGLFPSSLYHRPHLIPPASPVKGLPGVEQSNKSQSLHVNQPQVLPATQDILKALNKHHSVDENKALEFITENNLNQRPHEKVSDHSESTDLDDVSTPSGSDLETTSGSDLESDIESDKDKLKENGKLYKDKISPLQSLAALNSKREYNNHSVFSPCLEEQTVTGAVNDSIKAIASIAEKYFGSTGLVGLPDKKGTSLPYPSMFPLPFFPAISQSMYTFPERDVRPLPLKVEPESPKESKKVQKGTTESAFDLTTKCKEEKASPNAPSKSSAPTSSKHEQPLDLSMGSRSRATTTKQTESRKNHIFGEKKDIDSELKKTSEHFLQHARPAPFFMDPIYRVEKRKTMDPLEVLKEKYLRSSSGFLFHPQFPLPDQRTWMSAIENMAEKLESFNALKPEANDLIQSVPSMFSFRASSSALPENLLRKGKERYTCRYCGKIFPRSANLTRHLRTHTGEQPYRCKYCDRSFSISSNLQRHIRNIHNKEKPFKCHLCDRCFGQQTNLDRHLKKHENGNLSGTAASSPHSEIEGTGAILEEKEDSYFNEIRNFIGNNSHNKQSPLNIDERINGSHDKIMLTGQNSDILDDDEIEDEAILEDDEESDIDVKVMKEPNASAMLKNCSDEFEEESKSEVNCKVSPSRHDDDDDDEEEDFKKSLSALDHIRHFTDSLKIRKMDDGQFNDAELSPFTASHLTDDLKHPLYRKSKSQTYAMMLSLSDQESMHPTTHTSSSMWHNLARAAAESTALHSVSHV.

C2H2-type zinc fingers lie at residues 21-48, 75-97, and 103-125; these read YHCEECDQLFESKTELSNHQKYSCGTPH, HECKECDQVFPDMQSLEKHLLSH, and YKCDQCPKAFNWKSNLIRHQMSH. The C2H2-type 4; degenerate zinc-finger motif lies at 131 to 155; the sequence is YECENCSKQVFTDPSNLQRHIRSQH. C2H2-type zinc fingers lie at residues 161–183 and 189–211; these read HACSECGKTFATSSGLKQHKHIH and FVCEVCHKSYTQFSNLCRHKRMH. The C2H2-type 7; atypical zinc-finger motif lies at 218 to 240; sequence IKCKDCGQMFSTTSSLNKHRRFC. Disordered stretches follow at residues 371–421 and 529–612; these read ITEN…SDKD and PLKV…EKKD. Over residues 379 to 390 the composition is skewed to basic and acidic residues; it reads RPHEKVSDHSES. Residues 397–411 show a composition bias toward polar residues; that stretch reads STPSGSDLETTSGSD. A Nuclear localization signal motif is present at residues 420–433; that stretch reads KDKLKENGKLYKDK. Positions 529 to 542 are enriched in basic and acidic residues; that stretch reads PLKVEPESPKESKK. The CTBP-binding motif 1 signature appears at 551–555; the sequence is AFDLT. Low complexity predominate over residues 564–576; sequence SPNAPSKSSAPTS. Positions 582-586 match the CTBP-binding motif 2 motif; that stretch reads PLDLS. Positions 588 to 598 are enriched in polar residues; the sequence is GSRSRATTTKQ. Positions 599 to 612 are enriched in basic and acidic residues; it reads TESRKNHIFGEKKD. 3 consecutive C2H2-type zinc fingers follow at residues 731–753, 759–782, and 788–810; these read YTCRYCGKIFPRSANLTRHLRTH, YRCKYCDRSFSISSNLQRHIRNIH, and FKCHLCDRCFGQQTNLDRHLKKH. Residues 928–951 form a disordered region; that stretch reads KSEVNCKVSPSRHDDDDDDEEEDF.

Homooligomer. Interacts with ctbp.

The protein resides in the nucleus. It localises to the nucleus speckle. Functionally, transcriptional repressor during pronephros development. Plays a role in regionalization of the pronephros; may promote formation of the distal tubule and duct over formation of the glomus and proximal tubule. The sequence is that of MDS1 and EVI1 complex locus protein EVI1-B (mecom-b) from Xenopus laevis (African clawed frog).